The following is a 183-amino-acid chain: ATP synthase subunit delta (183 aa).

The protein belongs to the ATPase delta chain family. As to quaternary structure, F-type ATPases have 2 components, F(1) - the catalytic core - and F(0) - the membrane proton channel. F(1) has five subunits: alpha(3), beta(3), gamma(1), delta(1), epsilon(1). F(0) has three main subunits: a(1), b(2) and c(10-14). The alpha and beta chains form an alternating ring which encloses part of the gamma chain. F(1) is attached to F(0) by a central stalk formed by the gamma and epsilon chains, while a peripheral stalk is formed by the delta and b chains.

The protein resides in the cell inner membrane. F(1)F(0) ATP synthase produces ATP from ADP in the presence of a proton or sodium gradient. F-type ATPases consist of two structural domains, F(1) containing the extramembraneous catalytic core and F(0) containing the membrane proton channel, linked together by a central stalk and a peripheral stalk. During catalysis, ATP synthesis in the catalytic domain of F(1) is coupled via a rotary mechanism of the central stalk subunits to proton translocation. In terms of biological role, this protein is part of the stalk that links CF(0) to CF(1). It either transmits conformational changes from CF(0) to CF(1) or is implicated in proton conduction. This Rickettsia prowazekii (strain Madrid E) protein is ATP synthase subunit delta.